The chain runs to 882 residues: Alanine--tRNA ligase (882 aa).

4 residues coordinate Zn(2+): H570, H574, C672, and H676.

It belongs to the class-II aminoacyl-tRNA synthetase family. It depends on Zn(2+) as a cofactor.

It is found in the cytoplasm. The catalysed reaction is tRNA(Ala) + L-alanine + ATP = L-alanyl-tRNA(Ala) + AMP + diphosphate. Its function is as follows. Catalyzes the attachment of alanine to tRNA(Ala) in a two-step reaction: alanine is first activated by ATP to form Ala-AMP and then transferred to the acceptor end of tRNA(Ala). Also edits incorrectly charged Ser-tRNA(Ala) and Gly-tRNA(Ala) via its editing domain. In Xanthomonas euvesicatoria pv. vesicatoria (strain 85-10) (Xanthomonas campestris pv. vesicatoria), this protein is Alanine--tRNA ligase.